The primary structure comprises 504 residues: MSEVVTYEDALKDFEPIIGLEVHVELSTQTKLFSSAPNIAGPLASCASQGPNTLVTPVCLGLPGSLPTVNERAVDYGIALGLALGCSIADELIFARKNYFYPDLPKNYQISQFDSPLAYDGKLEVETESGDVFFVEIERAHLEEDAGKLAHKSSTGRIQGAQYSLIDYNRSGVPLVEIVSRPVFADRCAPQVARVFVELIREIVLSLGVSNARLERGNIRCDANVSLRPRGLGAGILPNRTETKNLNSLRSIERAIRYEIQRQATLISSGELVRQETRHWREDRGITLSGRVKADSHEYRYFPEPDLLPIPIPSDKVEAIRLSMPEHPLALRRRLKAEWKFSDLQFRDVLNSSVLKQVDETVRAGATPDGAKKWWTGEITRIASQRRCNASDLISPEAVAEIELLISKGILNDSLARKVLAAVIDESLSVQQAIEKYDLSLTESASVERVLEKVLSENQEVVQKVISGKTQAVGVLVGSCMKALGGKADASKLRQTILNRLLPR.

This sequence belongs to the GatB/GatE family. GatB subfamily. As to quaternary structure, heterotrimer of A, B and C subunits.

The catalysed reaction is L-glutamyl-tRNA(Gln) + L-glutamine + ATP + H2O = L-glutaminyl-tRNA(Gln) + L-glutamate + ADP + phosphate + H(+). It catalyses the reaction L-aspartyl-tRNA(Asn) + L-glutamine + ATP + H2O = L-asparaginyl-tRNA(Asn) + L-glutamate + ADP + phosphate + 2 H(+). In terms of biological role, allows the formation of correctly charged Asn-tRNA(Asn) or Gln-tRNA(Gln) through the transamidation of misacylated Asp-tRNA(Asn) or Glu-tRNA(Gln) in organisms which lack either or both of asparaginyl-tRNA or glutaminyl-tRNA synthetases. The reaction takes place in the presence of glutamine and ATP through an activated phospho-Asp-tRNA(Asn) or phospho-Glu-tRNA(Gln). This chain is Aspartyl/glutamyl-tRNA(Asn/Gln) amidotransferase subunit B, found in Tropheryma whipplei (strain Twist) (Whipple's bacillus).